The sequence spans 354 residues: N-acylethanolamine-hydrolyzing acid amidase (354 aa).

The first 22 residues, Met-1–Pro-22, serve as a signal peptide directing secretion. N-linked (GlcNAc...) asparagine glycosylation is found at Asn-35 and Asn-104. Cys-123 serves as the catalytic Nucleophile. N-linked (GlcNAc...) asparagine glycans are attached at residues Asn-306, Asn-312, and Asn-352.

The protein belongs to the acid ceramidase family. Heterodimer of an alpha and a beta subunit, produced by autocatalytic cleavage. N-glycosylated. Tunicamycin treatment causes a reduction in specific activity against N-palmitoylethanolamine. In terms of processing, autoproteolytic cleavage at pH 4.5 gives rise to the alpha and beta subunit. Cleavage gives rise to a conformation change that activates the enzyme. The same catalytic Cys residue mediates the autoproteolytic cleavage and subsequent hydrolysis of lipid substrates.

The protein localises to the lysosome. Its subcellular location is the membrane. The enzyme catalyses N-hexadecanoylethanolamine + H2O = ethanolamine + hexadecanoate. It catalyses the reaction an N-(long-chain fatty acyl)ethanolamine + H2O = a long-chain fatty acid + ethanolamine. The catalysed reaction is N-dodecanoylethanolamine + H2O = dodecanoate + ethanolamine. It carries out the reaction N-tetradecanoylethanolamine + H2O = tetradecanoate + ethanolamine. The enzyme catalyses an N-acylsphing-4-enine + H2O = sphing-4-enine + a fatty acid. It catalyses the reaction N-hexadecanoylsphing-4-enine + H2O = sphing-4-enine + hexadecanoate. The catalysed reaction is N-dodecanoylsphing-4-enine + H2O = dodecanoate + sphing-4-enine. It functions in the pathway lipid metabolism; fatty acid metabolism. Its function is as follows. Degrades bioactive fatty acid amides to their corresponding acids, with the following preference: N-palmitoylethanolamine &gt; N-myristoylethanolamine &gt; N-stearoylethanolamine &gt; N-oleoylethanolamine &gt; N-linoleoylethanolamine &gt; N-arachidonoylethanolamine. The protein is N-acylethanolamine-hydrolyzing acid amidase of Cavia porcellus (Guinea pig).